A 358-amino-acid polypeptide reads, in one-letter code: Ion-translocating oxidoreductase complex subunit D (358 aa).

7 helical membrane passes run V16–W36, F38–V58, I68–P90, A128–L148, F206–L226, I236–P256, and P286–I306.

This sequence belongs to the NqrB/RnfD family. The complex is composed of six subunits: RnfA, RnfB, RnfC, RnfD, RnfE and RnfG. FMN serves as cofactor.

The protein localises to the cellular chromatophore membrane. In terms of biological role, part of a membrane-bound complex that couples electron transfer with translocation of ions across the membrane. Required for nitrogen fixation. Involved in electron transfer to nitrogenase. The polypeptide is Ion-translocating oxidoreductase complex subunit D (Rhodobacter capsulatus (Rhodopseudomonas capsulata)).